The sequence spans 372 residues: Serine/threonine-protein kinase 17B (372 aa).

The region spanning 33–293 is the Protein kinase domain; the sequence is TLTPKELGRG…AESCLSHSWL (261 aa). ATP contacts are provided by residues 39-47 and Lys62; that span reads LGRGKFAVV. Residue Asp158 is the Proton acceptor of the active site. Residues 305-348 form a disordered region; the sequence is EETSGSSQIQDLTLRSSEEKTSKSSCNGSCGAREDKENIPEDGS. Residues 307 to 319 are compositionally biased toward polar residues; the sequence is TSGSSQIQDLTLR.

It belongs to the protein kinase superfamily. CAMK Ser/Thr protein kinase family. DAP kinase subfamily. As to quaternary structure, interacts with CHP1; the interaction induces CHP1 to translocate from the Golgi to the nucleus. Post-translationally, autophosphorylated.

Its subcellular location is the nucleus. It localises to the cell membrane. It is found in the endoplasmic reticulum-Golgi intermediate compartment. It catalyses the reaction L-seryl-[protein] + ATP = O-phospho-L-seryl-[protein] + ADP + H(+). The catalysed reaction is L-threonyl-[protein] + ATP = O-phospho-L-threonyl-[protein] + ADP + H(+). In terms of biological role, acts as a positive regulator of apoptosis. Phosphorylates myosin light chains. In Mus musculus (Mouse), this protein is Serine/threonine-protein kinase 17B (Stk17b).